Here is a 192-residue protein sequence, read N- to C-terminus: Casparian strip membrane protein 1 (192 aa).

Residues 1 to 26 lie on the Cytoplasmic side of the membrane; that stretch reads MTKSVRLEEGDASKVLVPVGSNKGVS. A helical transmembrane segment spans residues 27–47; it reads VMDLVLRLVGIAGTLGAAIAM. At 48-75 the chain is on the extracellular side; the sequence is GTNEQTLPFFTRFVVFNAEYDDFRSFRL. Residues 76–96 form a helical membrane-spanning segment; sequence FVIVNAIVCAYFVLTLPLSIV. The Cytoplasmic portion of the chain corresponds to 97-107; the sequence is HIMRSAARGSR. The chain crosses the membrane as a helical span at residues 108-128; that stretch reads ILLIIMDTVMLALLTAGASAA. Residues 129-161 are Extracellular-facing; it reads ASIVYLAHNGNTSTNWLPVCQQYGDFCQGASGS. Asn139 is a glycosylation site (N-linked (GlcNAc...) asparagine). The chain crosses the membrane as a helical span at residues 162–182; that stretch reads LIGSFGAVVVFILIILLGAIA. Over 183-192 the chain is Cytoplasmic; the sequence is LSRHAKRVVL.

Belongs to the Casparian strip membrane proteins (CASP) family. As to quaternary structure, homodimer and heterodimers.

It localises to the cell membrane. Its function is as follows. Regulates membrane-cell wall junctions and localized cell wall deposition. Required for establishment of the Casparian strip membrane domain (CSD) and the subsequent formation of Casparian strips, a cell wall modification of the root endodermis that determines an apoplastic barrier between the intraorganismal apoplasm and the extraorganismal apoplasm and prevents lateral diffusion. This chain is Casparian strip membrane protein 1, found in Lactuca saligna (Willowleaf lettuce).